Consider the following 470-residue polypeptide: Aminodeoxychorismate synthase component 1 (470 aa).

This sequence belongs to the anthranilate synthase component I family. Monomer. Heterodimer consisting of two non-identical subunits: a glutamine amidotransferase subunit (PabA) and a aminodeoxychorismate synthase subunit (PabB). Mg(2+) is required as a cofactor.

It carries out the reaction chorismate + L-glutamine = 4-amino-4-deoxychorismate + L-glutamate. It functions in the pathway cofactor biosynthesis; tetrahydrofolate biosynthesis; 4-aminobenzoate from chorismate: step 1/2. Its function is as follows. Part of a heterodimeric complex that catalyzes the two-step biosynthesis of 4-amino-4-deoxychorismate (ADC), a precursor of p-aminobenzoate (PABA) and tetrahydrofolate. In the first step, a glutamine amidotransferase (PabA) generates ammonia as a substrate that, along with chorismate, is used in the second step, catalyzed by aminodeoxychorismate synthase (PabB) to produce ADC. The sequence is that of Aminodeoxychorismate synthase component 1 (pabB) from Bacillus subtilis (strain 168).